Reading from the N-terminus, the 72-residue chain is Disintegrin sasaimin (72 aa).

The Disintegrin domain maps to 1-72; sequence EAGEECDCGA…SAGCPRNPFH (72 aa). Cystine bridges form between C6–C21, C8–C16, C15–C38, C29–C35, C34–C59, and C47–C66. The Cell attachment site signature appears at 51-53; sequence RGD.

This sequence belongs to the venom metalloproteinase (M12B) family. P-II subfamily. P-IIa sub-subfamily. Monomer. Expressed by the venom gland.

The protein localises to the secreted. Functionally, inhibits ADP- (IC(50)=66 nM) and collagen-induced (IC(50)=100 nM) aggregation of human platelets. In vitro, inhibits adhesion of endothelial cells to vitronectin, type-I collagen and, to a lower degree, fibronectin and laminin. The polypeptide is Disintegrin sasaimin (Cerrophidion sasai (Costa Rica montane pitviper)).